A 116-amino-acid chain; its full sequence is MRHRKAYRKLSKPTPQRKALLKALLISLFKHGKIVTTLPRAKEVTRIAEKLLTIAKEDSVHHRRLVYAWLQDRELVRKVFVDIAPKYKDRNGGYTRILKLGMRRGDAAEQAVIELV.

It belongs to the bacterial ribosomal protein bL17 family. Part of the 50S ribosomal subunit. Contacts protein L32.

The polypeptide is Large ribosomal subunit protein bL17 (Dictyoglomus thermophilum (strain ATCC 35947 / DSM 3960 / H-6-12)).